Reading from the N-terminus, the 479-residue chain is Glutamyl-tRNA(Gln) amidotransferase subunit A (479 aa).

Residues lysine 71 and serine 146 each act as charge relay system in the active site. Residue serine 170 is the Acyl-ester intermediate of the active site.

This sequence belongs to the amidase family. GatA subfamily. In terms of assembly, heterotrimer of A, B and C subunits.

It catalyses the reaction L-glutamyl-tRNA(Gln) + L-glutamine + ATP + H2O = L-glutaminyl-tRNA(Gln) + L-glutamate + ADP + phosphate + H(+). Functionally, allows the formation of correctly charged Gln-tRNA(Gln) through the transamidation of misacylated Glu-tRNA(Gln) in organisms which lack glutaminyl-tRNA synthetase. The reaction takes place in the presence of glutamine and ATP through an activated gamma-phospho-Glu-tRNA(Gln). The chain is Glutamyl-tRNA(Gln) amidotransferase subunit A from Lactobacillus acidophilus (strain ATCC 700396 / NCK56 / N2 / NCFM).